An 89-amino-acid polypeptide reads, in one-letter code: Small ribosomal subunit protein uS17 (89 aa).

The protein belongs to the universal ribosomal protein uS17 family. As to quaternary structure, part of the 30S ribosomal subunit.

Its function is as follows. One of the primary rRNA binding proteins, it binds specifically to the 5'-end of 16S ribosomal RNA. The sequence is that of Small ribosomal subunit protein uS17 from Coxiella burnetii (strain RSA 493 / Nine Mile phase I).